We begin with the raw amino-acid sequence, 223 residues long: Peptidyl-tRNA hydrolase (223 aa).

Tyr14 contributes to the tRNA binding site. The active-site Proton acceptor is the His19. 3 residues coordinate tRNA: Tyr64, Asn66, and Asn112. The tract at residues Met183–Pro223 is disordered.

Belongs to the PTH family. As to quaternary structure, monomer.

It is found in the cytoplasm. It catalyses the reaction an N-acyl-L-alpha-aminoacyl-tRNA + H2O = an N-acyl-L-amino acid + a tRNA + H(+). Functionally, hydrolyzes ribosome-free peptidyl-tRNAs (with 1 or more amino acids incorporated), which drop off the ribosome during protein synthesis, or as a result of ribosome stalling. In terms of biological role, catalyzes the release of premature peptidyl moieties from peptidyl-tRNA molecules trapped in stalled 50S ribosomal subunits, and thus maintains levels of free tRNAs and 50S ribosomes. The chain is Peptidyl-tRNA hydrolase from Sorangium cellulosum (strain So ce56) (Polyangium cellulosum (strain So ce56)).